Reading from the N-terminus, the 361-residue chain is Tetraacyldisaccharide 4'-kinase (361 aa).

ATP is bound at residue 68–75 (TVGGTGKT).

Belongs to the LpxK family.

It catalyses the reaction a lipid A disaccharide + ATP = a lipid IVA + ADP + H(+). The protein operates within glycolipid biosynthesis; lipid IV(A) biosynthesis; lipid IV(A) from (3R)-3-hydroxytetradecanoyl-[acyl-carrier-protein] and UDP-N-acetyl-alpha-D-glucosamine: step 6/6. Transfers the gamma-phosphate of ATP to the 4'-position of a tetraacyldisaccharide 1-phosphate intermediate (termed DS-1-P) to form tetraacyldisaccharide 1,4'-bis-phosphate (lipid IVA). The sequence is that of Tetraacyldisaccharide 4'-kinase from Pelobacter propionicus (strain DSM 2379 / NBRC 103807 / OttBd1).